A 513-amino-acid chain; its full sequence is ATP synthase subunit alpha (513 aa).

Gly-169 to Thr-176 lines the ATP pocket.

It belongs to the ATPase alpha/beta chains family. In terms of assembly, F-type ATPases have 2 components, CF(1) - the catalytic core - and CF(0) - the membrane proton channel. CF(1) has five subunits: alpha(3), beta(3), gamma(1), delta(1), epsilon(1). CF(0) has three main subunits: a(1), b(2) and c(9-12). The alpha and beta chains form an alternating ring which encloses part of the gamma chain. CF(1) is attached to CF(0) by a central stalk formed by the gamma and epsilon chains, while a peripheral stalk is formed by the delta and b chains.

The protein localises to the cell inner membrane. The enzyme catalyses ATP + H2O + 4 H(+)(in) = ADP + phosphate + 5 H(+)(out). Its function is as follows. Produces ATP from ADP in the presence of a proton gradient across the membrane. The alpha chain is a regulatory subunit. The chain is ATP synthase subunit alpha from Pectobacterium carotovorum subsp. carotovorum (strain PC1).